Reading from the N-terminus, the 100-residue chain is Urease subunit gamma (100 aa).

This sequence belongs to the urease gamma subunit family. As to quaternary structure, heterotrimer of UreA (gamma), UreB (beta) and UreC (alpha) subunits. Three heterotrimers associate to form the active enzyme.

It localises to the cytoplasm. The enzyme catalyses urea + 2 H2O + H(+) = hydrogencarbonate + 2 NH4(+). It functions in the pathway nitrogen metabolism; urea degradation; CO(2) and NH(3) from urea (urease route): step 1/1. The protein is Urease subunit gamma of Acinetobacter baumannii (strain AB307-0294).